The primary structure comprises 1102 residues: MDYDLFQSDDEEILATFIQATQKQETLSAQIDVDDSEEDLVDGLHLPEFNCSGRDTLKSQLCEGGFLGNGYAQLDPPRSRLDYLCFDFAPAQLAVGAVRNYLYGEACKNVQKLLTVVMGQQHLQATAASMNSGWYRVRQQVTHFYHLMLLLRGNELLPSHFLDGFRQLLNDQLDADTWKVLYFAEHNKGNDCQAPAYHLYHGVLEWRFLDLHILYASGNDQAFLGQLERTLDDLIVCAGHHYRSKHRSELIHSSPFMCRCNKELWLLLKRLIPKWLGERELDFWTLFHKAMQRHKSLHFQGESNAISLAYHELYSWLRLGLARLDEYNSEGWYQPDHSPLTAAPESFQTASLLKQFLASQPDEQQRRVYLIQLSPLQLQLGKPDTDVLCQLWEYFHRSLNCNFSVGTELDQLPLTCSNGSAYVDRYNKLLSKSHIEDLNLSSFTMYAWMLGKTLKLLPSQGRSNQRQKLLGRIFSKFSAAKLLALNEPGIHHVIELFLCLLLCHEDLSELAPKLREMLLCLALEKLPPVRRILVAKGHMALLLLHAQHRLSMDDYVSKLLNQLATIRNDAEVGAIYVGSLQAIFNLADDFNRGEQQLLGPWLAHYVEKCGQASQDRVWQTLHNLILRLSERRAVAGNASGIKEALQQHIMPLVRTQYVSSHSSWLPKLAANFIALENNGDKLLLGFLQGPEPINMAASAQLLLQVLEDGGRPASSTILQVWVKSLVLLNAQHESVLALMPHVTQLEEFRLLAIDPTSLEGGREPLCAFFGALGRRAQQEEAAAHVRMQLSHKLHAYVNHFELWLPPDRSRSELGSRFYSFLAIVIYNCSTLAYVRSKPSCFFHLAMVRFLLTTQLQAGVPPEGRLPQVVHKIFPVLLQGIGRLPYRTDAYVAKTLEQLVQHWTPHFSFSSNAKLVARPYATLLQADVDGELAQFVLQLLVTQFLVVQRRRAGQHAGLVITIMQQLIESTGKEQEEQLLTVLRGVHIPLLEHVMFVDEVDLSRNQVFGLYKVLISHDAYKRSQAVRDMCSNHLRSLAEKHLAHCTYFYFQMLINLAELAPDLVAPILSFIREQAEQVELKRGAGEDVGIRKCLQRLQKVLSRV.

The protein belongs to the MMS22 family. MMS22L subfamily.

It is found in the nucleus. Its subcellular location is the chromosome. In terms of biological role, involved in recombination-dependent repair of stalled or collapsed replication forks. The protein is Protein MMS22-like of Drosophila melanogaster (Fruit fly).